We begin with the raw amino-acid sequence, 360 residues long: MVMGGEASMELDQCFQKMKMEGISIKEWKDIPVELLMRILSLVDDRNVIVASGVCTGWRDAISFGLTRLRLSWCNNNMNSLVLSLVPKFVKLQTLNLRQDKPQLEDNAVEAIANHCHELQELDLSKSLKITDRSLYALAHGCPDLTKLNLSGCTSFSDTAIAYLTRFCRKLKVLNLCGCVKAVTDNALEAIGNNCNQMQSLNLGWCENISDDGVMSLAYGCPDLRTLDLCGCVLITDESVVALADWCVHLRSLGLYYCRNITDRAMYSLAQSGVKNKPGSWKSVKKGKYDEEGLRSLNISQCTALTPSAVQAVCDSFPALHTCSGRHSLVMSGCLNLTTVHCACILQAHRAHNAVPHPAH.

An F-box domain is found at 25-71; that stretch reads IKEWKDIPVELLMRILSLVDDRNVIVASGVCTGWRDAISFGLTRLRL. (indol-3-yl)acetate contacts are provided by residues 127 to 128, 149 to 152, 175 to 178, and Asn-202; these read SL, NLSG, and NLCG.

Part of a SCF (ASK-cullin-F-box) protein ligase complex. Interacts with CUL1 (RUB1-modified and non-modified isoforms), SKP1A, SKP1B and ASK18. Recruit DPB and phosphorylated E2FC. Interacts with auxin. Auxin controls the interaction with DPB. Polyubiquitinated and subsequently targeted to proteasome. Auxin promotes this ubiquitination-mediated degradation. In terms of tissue distribution, expressed in embryo, seedlings, hypocotyl, roots, leaves and flowers.

Its subcellular location is the nucleus. Its pathway is protein modification; protein ubiquitination. Functionally, component of SCF(SKP2A) E3 ubiquitin ligase complexes, which mediate the ubiquitination and subsequent proteasomal degradation of target proteins (including cell cycle repressors). Acts as an auxin receptor; one active auxin is indole-3-acetate. Regulates the stability of the transcription factors E2FC and DPB, repressors of cell proliferation. Confers increase tolerance to osmotic stress by promoting cell division, especially in meristems. Promotes the formation of lateral root primordia. The polypeptide is F-box protein SKP2A (SKP2A) (Arabidopsis thaliana (Mouse-ear cress)).